Consider the following 833-residue polypeptide: Leucine--tRNA ligase (833 aa).

A 'HIGH' region motif is present at residues 41–52; it reads PYPSGAGLHVGH. A 'KMSKS' region motif is present at residues 610–614; that stretch reads KMSKS. Lys613 lines the ATP pocket.

Belongs to the class-I aminoacyl-tRNA synthetase family.

The protein localises to the cytoplasm. The catalysed reaction is tRNA(Leu) + L-leucine + ATP = L-leucyl-tRNA(Leu) + AMP + diphosphate. In Streptococcus pyogenes serotype M12 (strain MGAS2096), this protein is Leucine--tRNA ligase.